The primary structure comprises 311 residues: Malate dehydrogenase (311 aa).

NAD(+) is bound by residues 7–13 and aspartate 34; that span reads GAAGGIG. Arginine 81 and arginine 87 together coordinate substrate. NAD(+) contacts are provided by residues asparagine 94 and 117-119; that span reads ITN. 2 residues coordinate substrate: asparagine 119 and arginine 153. Histidine 177 (proton acceptor) is an active-site residue. Methionine 227 is a binding site for NAD(+).

It belongs to the LDH/MDH superfamily. MDH type 1 family. As to quaternary structure, homodimer.

The enzyme catalyses (S)-malate + NAD(+) = oxaloacetate + NADH + H(+). Its function is as follows. Catalyzes the reversible oxidation of malate to oxaloacetate. This is Malate dehydrogenase from Shewanella piezotolerans (strain WP3 / JCM 13877).